The primary structure comprises 429 residues: Probable exoglucanase GH6D (429 aa).

A signal peptide spans 1 to 17 (MRAVYAILAGLLATGSA). Residues Trp-75 and Ser-77 each contribute to the substrate site. Active-site proton donor residues include Asp-115 and Asp-162. Substrate is bound by residues Asn-206 and Trp-209. Asn-237 carries N-linked (GlcNAc...) asparagine glycosylation. Residues Asn-240, Trp-300, Lys-328, and Glu-332 each coordinate substrate. Residues 240–261 (NYNPYSTNNPPPYTAGSPSADE) are disordered. The segment at 362-390 (PEIRADGGGGGSPAPGPSSTAVAPSPSAT) is disordered. Low complexity predominate over residues 378 to 390 (PSSTAVAPSPSAT). The 36-residue stretch at 394–429 (NCAARWAQCGGQGWTGPTCCAQGTCQASNQWYSQCL) folds into the CBM1 domain.

The protein belongs to the glycosyl hydrolase 6 (cellulase B) family.

The protein resides in the secreted. Functionally, probable exoglucanase that may play an important function in biomass degradation by catalyzing the hydrolysis of cellulose. This Podospora anserina (strain S / ATCC MYA-4624 / DSM 980 / FGSC 10383) (Pleurage anserina) protein is Probable exoglucanase GH6D.